The primary structure comprises 847 residues: Aryl hydrocarbon receptor (847 aa).

The tract at residues 1–39 is disordered; that stretch reads MNGGGANITYASRKRRKPVQKTVKPIPAEGIKSNPSKRH. 2 short sequence motifs (nuclear localization signal) span residues 13 to 16 and 37 to 42; these read RKRR and KRHRDR. One can recognise a bHLH domain in the interval 27–80; sequence PAEGIKSNPSKRHRDRLNTELDRLASLLPFPQDVINKLDKLSVLRLSVSYLRAK. A DNA-binding region spans residues 38 to 66; sequence RHRDRLNTELDRLASLLPFPQDVINKLDK. 3 required for maintaining the overall integrity of the AHR:ARNT heterodimer and its transcriptional activity regions span residues 50–82, 117–125, and 264–266; these read LASL…AKSF, LLQALNGFV, and FAI. The Nuclear export signal motif lies at 64-72; it reads LDKLSVLRL. In terms of domain architecture, PAS 1 spans 120–173; sequence ALNGFVLVVTVDALVFYASSTIQDYLGFQQSDVIHQSVYELIHTEDRAEFQRQL. In terms of domain architecture, PAS 2 spans 281–336; that stretch reads KNFIFRTKHKLDFTPTGCDAKGQIVLGYTEAELCMRGSGYQFIHAADMLYCAESHI. A PAC domain is found at 346-384; it reads LAVFRLLTKDNRWAWVQSNARFIYKNGRPDFIIATQRPL. Disordered regions lie at residues 430–452 and 825–847; these read KSGT…VHPS and HLPP…GRLL. Polar residues predominate over residues 440–452; that stretch reads TKPTPSKDSVHPS.

Homodimer. Heterodimer; efficient DNA binding requires dimerization with another bHLH protein. Binds MYBBP1A. Interacts with coactivators including SRC-1, RIP140 and NOCA7, and with the corepressor SMRT. Interacts with NEDD8 and IVNS1ABP. Interacts with BMAL1. Interacts with HSP90AB1. Interacts with ARNT; the heterodimer ARNT:AHR binds to core DNA sequence 5'-TGCGTG-3' within the dioxin response element (DRE) of target gene promoters and activates their transcription. Interacts with TIPARP; leading to mono-ADP-ribosylation of AHR and subsequent inhibition of AHR. Post-translationally, mono-ADP-ribosylated, leading to inhibit transcription activator activity of AHR.

It localises to the cytoplasm. Its subcellular location is the nucleus. Its function is as follows. Ligand-activated transcription factor that enables cells to adapt to changing conditions by sensing compounds from the environment, diet, microbiome and cellular metabolism, and which plays important roles in development, immunity and cancer. Upon ligand binding, translocates into the nucleus, where it heterodimerizes with ARNT and induces transcription by binding to xenobiotic response elements (XRE). Regulates a variety of biological processes, including angiogenesis, hematopoiesis, drug and lipid metabolism, cell motility and immune modulation. Xenobiotics can act as ligands: upon xenobiotic-binding, activates the expression of multiple phase I and II xenobiotic chemical metabolizing enzyme genes (such as the CYP1A1 gene). Mediates biochemical and toxic effects of halogenated aromatic hydrocarbons. Next to xenobiotics, natural ligands derived from plants, microbiota, and endogenous metabolism are potent AHR agonists. Tryptophan (Trp) derivatives constitute an important class of endogenous AHR ligands. Acts as a negative regulator of anti-tumor immunity: indoles and kynurenic acid generated by Trp catabolism act as ligand and activate AHR, thereby promoting AHR-driven cancer cell motility and suppressing adaptive immunity. Regulates the circadian clock by inhibiting the basal and circadian expression of the core circadian component PER1. Inhibits PER1 by repressing the CLOCK-BMAL1 heterodimer mediated transcriptional activation of PER1. The heterodimer ARNT:AHR binds to core DNA sequence 5'-TGCGTG-3' within the dioxin response element (DRE) of target gene promoters and activates their transcription. The polypeptide is Aryl hydrocarbon receptor (AHR) (Oryctolagus cuniculus (Rabbit)).